The sequence spans 1793 residues: MSGPTKLVFFGNEFPNDDLKALFRGLHRHGKDRRFRQLATFLEESTRVLQNEVAQLPEPLKKLVPHFENLMPLTEVDFRQGPLGAAMESALLTILELGMFIGHYEAEERVWDLSADRTTLAGLSIGLLAAAGVALSTHLAEVVQNGAECVRVSFRLGVYVHDISRKLEAPQADGSLLSWAHVVTGETASDLQEELSRYNTETGTPELLKVFISAADKTSVSVSGPPSRIRAAFRASQRLRYSKSLALPVYDGLCHAAHLYDEETIHRVLHPDGSVIPTSRPVQLALLSSRSGQPFEATTAAELFRAISTELLTGTIFLDNITAGILDRTERCADAPQCQIETYRTSLVFKGLLKALEACFPDRTISTTDLIPWVFQDYGARQPKSYADSKLAIVGMACRMPGGANDLDLFWELLAQGRDTHTTVPADRFDLETHYDPTGETENATRTPFGNFIDQPGLFDAGFFNMSPREAEQTDPMHRLALVTAYEALEMAGIVSGRTPSSNPKRIATFYGQASDDWRELNASQNIGTYAVPGGERAFANGRINYFFKFGGPSFNLDTACSSGLAAVQAACSALWAGEADTVLAGGLNIITDPDNYAGLGNGHFLSRTGQCKVWDQSADGYCRADGVGSVVIKRLEDAEADNDNILAVVLSAATNHSAEAISITHPHAGAQKENYTQVLHQAAVNPLDISYVELHGTGTQAGDAQEAESVLDIFAPRAHRRRADQPLHLGAVKSNIGHGEAAAGIASLLKVLLMYQKNEIPAHIGIPTVINPAIPTDLEQRQVYLPRTKTAWPRAAGQIRRAIVNSFGAHGGNTTLVLEDAPEKQVTVAREERSTHPVVISAKSKKSLAANVETLLAYLDENPETDLGDLSYTTCARRMHHSWRLATAVSDIPALQKFLRNAVSNDAVSQTRPIPTEAPHVVFTFTGQGAYYAGLAQGLFQALPFFRAEVRQLDHLSQRLGFPSIVPVILGEVEEGTATALVTQLSIVIVEIALARLWLLLLGIPAPHAVIGHSLGEYAALAVAGVLSTADALYLVGHRAQLIEEHCTPGSHAMLSVRATIADIERLVGTGADAPTYELSCQNTHQDTVIGGSIQDLNAIREKLEPEGIKCVNVDVPFAFHTAQMDAVRERLAKAVAAVPFKTPSVPVLSPLLGSVVFDGKSINPEYIVRATREPVRFATAIDAAQELGIVNSQTLWVDIGPHPICASFVRSLVPGARIVSSCRRNEDNFATMAKSLCTLHLAGRTPSWAEYFRPDEQAYSLLRLPKYRWNEVNYWIQYLGTWTLDKAHLKNGGSQKRTITDVPSVSSLRTSLIHQVTEETVDKTTATLKAISDIQHPDFLEAVHGHTMNNCGVATSSIWTDMAMTVGEHLYRRLVPGTDHVLMDLCDFEVQHAQVANTNSNTPQPLALEAHLDLPTRHMSLAWYDVNATTNQRADAPFATGSIKYPADPTGAAWSIEWSRITHLIQGRIEALQHLAAENKASTLSKPLAYALFKNVVDYAPRYRGMDRVVIHDHEAFSDITLTTDRHGTWHTPPHWIDSVSHLAGLVMNGSDASNTRDFFYVTPGCGSCRMTEPLIAGGKYRNYVRMFPMPDEAHMYAGDLYILREDKIIGVVEQLKFRRVPRLLMDRFFSPNKNAAAHAAPAPAPAAVPAVKKQPPTETIQPQAPKTEQKQDQLQLPNLASAAPSTANSSSSPSSSGVATPTTEQEAPVADASAVTGVAGKCLELIANETGLGVAELTADATFVQLGVDSLMSLVLSEKLRSEMGLEIKSSLFLECPTVGDLTGWLEQYC.

The segment at 16-250 (NDDLKALFRG…YSKSLALPVY (235 aa)) is N-terminal acylcarrier protein transacylase domain (SAT). Residues 388 to 821 (DSKLAIVGMA…GGNTTLVLED (434 aa)) form the Ketosynthase family 3 (KS3) domain. Residues cysteine 561, histidine 696, and histidine 739 each act as for beta-ketoacyl synthase activity in the active site. Positions 923–1245 (VFTFTGQGAY…KSLCTLHLAG (323 aa)) are malonyl-CoA:ACP transacylase (MAT) domain. Positions 1312 to 1634 (TSLIHQVTEE…RLLMDRFFSP (323 aa)) are product template (PT) domain. The segment at 1316 to 1452 (HQVTEETVDK…GSIKYPADPT (137 aa)) is N-terminal hotdog fold. The 314-residue stretch at 1316–1629 (HQVTEETVDK…FRRVPRLLMD (314 aa)) folds into the PKS/mFAS DH domain. Catalysis depends on histidine 1348, which acts as the Proton acceptor; for dehydratase activity. The interval 1482-1629 (KASTLSKPLA…FRRVPRLLMD (148 aa)) is C-terminal hotdog fold. Residue aspartate 1540 is the Proton donor; for dehydratase activity of the active site. Low complexity predominate over residues 1642 to 1659 (AAPAPAPAAVPAVKKQPP). The interval 1642–1714 (AAPAPAPAAV…TTEQEAPVAD (73 aa)) is disordered. Residues 1660 to 1681 (TETIQPQAPKTEQKQDQLQLPN) are compositionally biased toward polar residues. Positions 1683–1706 (ASAAPSTANSSSSPSSSGVATPTT) are enriched in low complexity. Positions 1716–1793 (SAVTGVAGKC…DLTGWLEQYC (78 aa)) constitute a Carrier domain. Serine 1753 bears the O-(pantetheine 4'-phosphoryl)serine mark.

Pantetheine 4'-phosphate is required as a cofactor.

The catalysed reaction is holo-[ACP] + 9 malonyl-CoA + acetyl-CoA + 9 H(+) = 3-(2,4-dioxopentyl)-3,6,8,9-tetrahydroxy-1-oxo-1,2,3,4-tetrahydroanthracene-2-carboxyl-[ACP] + 9 CO2 + 10 CoA + 2 H2O. Its pathway is secondary metabolite biosynthesis. Non-reducing polyketide synthase; part of the gene cluster that mediates the biosynthesis of the linear tetracyclic TAN-1612 neuropeptide Y receptor antagonist. The decaketide backbone of TAN-1612 is synthesized by the non-reducing polyketide synthase adaA via condensation of one acetyl-CoA starter unit with 9 malonyl-CoA units. The FAD-dependent monooxygenase adaC then performs hydroxylation at C2 while the polaketide chain is still attached to the NRPKS adaA. The alpha-hydroxylation step at C2 appears to be crucial for the following C18-C1 Claisen cyclization and release of the C9-hydroxyl version of TAN-1612 from the NRPKS adaA, two steps performed by the lactamase-like protein adaB. Finally, the O-methyltransferase adaD performs the C9 O-methylation to complete the biosynthesis of TAN-1612. The sequence is that of Non-reducing polyketide synthase adaA from Aspergillus niger (strain ATCC MYA-4892 / CBS 513.88 / FGSC A1513).